The primary structure comprises 418 residues: L-rhamnose isomerase (418 aa).

Mn(2+) is bound by residues H262, D294, and D296.

It belongs to the rhamnose isomerase family. Homotetramer. Requires Mn(2+) as cofactor.

It localises to the cytoplasm. It catalyses the reaction L-rhamnopyranose = L-rhamnulose. The protein operates within carbohydrate degradation; L-rhamnose degradation; glycerone phosphate from L-rhamnose: step 1/3. Catalyzes the interconversion of L-rhamnose and L-rhamnulose. This Cronobacter sakazakii (strain ATCC BAA-894) (Enterobacter sakazakii) protein is L-rhamnose isomerase.